Reading from the N-terminus, the 353-residue chain is MTATLERRESASLWGRFCDWVTSTENRLYIGWFGVVMIPTLLTATSVFIIAFIAAPPVDIDGIREPVSGSLLYGNNIISGAIVPTSAAIGLHFYPIWEAASVDEWLYNGGPYELIVLHFFLGICCYMGREWELSYRLGMRPWIAVAYSAPVAAATAVFLIYPIGQGSFSDGMPLGISGTFNFMIVFQAEHNILMHPFHMLGVAGVFGGSLFSAMHGSLVTSSLIRETTENESANAGYKFGQEEETYNIVAAHGYFGRLIFQYASFNNSRSLHFFLAAWPVVGIWFTALGISTMAFNLNGFNFNQSVVDSQGRVINTWADIINRANLGMEVMHERNAHNFPLDLASVEAPSVNG.

Thr2 is modified (N-acetylthreonine). Thr2 carries the phosphothreonine modification. The next 3 helical transmembrane spans lie at Tyr29–Ser46, His118–Leu133, and Trp142–Ala156. Position 118 (His118) interacts with chlorophyll a. Pheophytin a is bound at residue Tyr126. [CaMn4O5] cluster is bound by residues Asp170 and Glu189. A helical transmembrane segment spans residues Phe197–Leu218. Residue His198 participates in chlorophyll a binding. A quinone is bound by residues His215 and Ser264 to Phe265. His215 lines the Fe cation pocket. His272 is a binding site for Fe cation. A helical membrane pass occupies residues Phe274–Leu288. Positions 332, 333, 342, and 344 each coordinate [CaMn4O5] cluster. Positions Ser345–Gly353 are excised as a propeptide.

It belongs to the reaction center PufL/M/PsbA/D family. In terms of assembly, PSII is composed of 1 copy each of membrane proteins PsbA, PsbB, PsbC, PsbD, PsbE, PsbF, PsbH, PsbI, PsbJ, PsbK, PsbL, PsbM, PsbT, PsbX, PsbY, PsbZ, Psb30/Ycf12, at least 3 peripheral proteins of the oxygen-evolving complex and a large number of cofactors. It forms dimeric complexes. Requires The D1/D2 heterodimer binds P680, chlorophylls that are the primary electron donor of PSII, and subsequent electron acceptors. It shares a non-heme iron and each subunit binds pheophytin, quinone, additional chlorophylls, carotenoids and lipids. D1 provides most of the ligands for the Mn4-Ca-O5 cluster of the oxygen-evolving complex (OEC). There is also a Cl(-1) ion associated with D1 and D2, which is required for oxygen evolution. The PSII complex binds additional chlorophylls, carotenoids and specific lipids. as cofactor. Post-translationally, tyr-161 forms a radical intermediate that is referred to as redox-active TyrZ, YZ or Y-Z. C-terminally processed by CTPA; processing is essential to allow assembly of the oxygen-evolving complex and thus photosynthetic growth.

The protein localises to the plastid. The protein resides in the chloroplast thylakoid membrane. It catalyses the reaction 2 a plastoquinone + 4 hnu + 2 H2O = 2 a plastoquinol + O2. Functionally, photosystem II (PSII) is a light-driven water:plastoquinone oxidoreductase that uses light energy to abstract electrons from H(2)O, generating O(2) and a proton gradient subsequently used for ATP formation. It consists of a core antenna complex that captures photons, and an electron transfer chain that converts photonic excitation into a charge separation. The D1/D2 (PsbA/PsbD) reaction center heterodimer binds P680, the primary electron donor of PSII as well as several subsequent electron acceptors. This Chaetosphaeridium globosum (Charophycean green alga) protein is Photosystem II protein D1.